Here is a 413-residue protein sequence, read N- to C-terminus: Divalent metal cation transporter MntH (413 aa).

The Cytoplasmic portion of the chain corresponds to 1–19 (MTDNRVENSSGRAARKLRL). Residues 20-39 (ALMGPAFIAAIGYIDPGNFA) form a helical membrane-spanning segment. Over 40–51 (TNIQAGASFGYQ) the chain is Periplasmic. The helical transmembrane segment at 52–71 (LLWVVVWANLMAMLIQILSA) threads the bilayer. Over 72–95 (KLGIATGKNLAEQIRDHYPRPVVW) the chain is Cytoplasmic. A helical transmembrane segment spans residues 96–118 (FYWVQAEIIAMATDLAEFIGAAI). The Periplasmic portion of the chain corresponds to 119–125 (GFKLILG). A helical transmembrane segment spans residues 126–145 (VSLLQGAVLTGIATFLILML). Residues 146 to 155 (QRRGQKPLEK) are Cytoplasmic-facing. The helical transmembrane segment at 156 to 175 (VIGGLLLFVAAAYIVELFFS) threads the bilayer. The Periplasmic portion of the chain corresponds to 176–196 (QPDMAQLGKGMVIPALPNPEA). Residues 197–220 (VFLAAGVLGATIMPHVIYLHSSLT) form a helical membrane-spanning segment. Topologically, residues 221–238 (QHLHGGTRQQRYSATKWD) are cytoplasmic. A helical membrane pass occupies residues 239–258 (VAIAMTIAGFVNLAMMATAA). Residues 259–276 (AAFHFSGHTGIADLDQAY) lie on the Periplasmic side of the membrane. Residues 277 to 297 (LTLEPLLSHAAATVFGLSLVA) form a helical membrane-spanning segment. Topologically, residues 298–327 (AGLSSTVVGTLAGQVVMQGFVRFHIPLWVR) are cytoplasmic. A helical membrane pass occupies residues 328-344 (RTITMLPSFIVILMGLD). Over 345 to 350 (PTRILV) the chain is Periplasmic. The helical transmembrane segment at 351–370 (MSQVLLSFGIALALVPLLIF) threads the bilayer. Residues 371-387 (TSNATLMGELVNTRRVK) lie on the Cytoplasmic side of the membrane. Residues 388-406 (QIGWIIVVLVVALNIWLLV) traverse the membrane as a helical segment. Over 407 to 413 (GTVMGLS) the chain is Periplasmic.

It belongs to the NRAMP family.

The protein resides in the cell inner membrane. Its function is as follows. H(+)-stimulated, divalent metal cation uptake system. The chain is Divalent metal cation transporter MntH from Salmonella schwarzengrund (strain CVM19633).